Here is a 195-residue protein sequence, read N- to C-terminus: MGNHAMLLEKHTAVRKGRLHDGKVMVMRSNLRWCSDGLEFACWNGEVIRLAFIIDAFDREIIAWTAVANAGISGSDVRDMMLEAVEKRFHATRAPHAIEHLSDNGSAYTARDTRLFAQALNLTPCFTPVASPQSNGMSEAFVKTLKRDYIRISALPDAQTALRLIDGWIEDYNEIHPHSALKMASPRQFIRAKSI.

In terms of domain architecture, Integrase catalytic spans 25–194 (MVMRSNLRWC…SPRQFIRAKS (170 aa)).

This chain is Insertion element IS136 uncharacterized protein Atu4601, found in Agrobacterium fabrum (strain C58 / ATCC 33970) (Agrobacterium tumefaciens (strain C58)).